The sequence spans 374 residues: MSTLRIALVAGEASGDILGAGLMRALKVQHPAVEFIGVGGPLMEAEGLVSYFPMERLAVMGLVEVLGRLRELLARRKKLIQTLIAEKPDVFIGIDAPDFTLNIELKLRQARIKTVHYVSPSVWAWRQKRVLKIREGCDLMLTLFPFEARFYEEKGVPVKFVGHSLADAIPLEADRAAARAELGLPEGPLVALMPGSRGGEVGRLGALFLDAAQRLRAMRPGVRFIMPCASPERRVQLEQLLANRDLPLTLLDGQSHKALAACDAVLIASGTATLEALLYKRPMVVAYRLAPLTFWILKRMVKSPYISLPNLLAQRLLVPELLQDDATADALAQTLSPLIEGGEEQTRGFDEIHRTLRRDASNQAAQAVLGLIGK.

This sequence belongs to the LpxB family.

It catalyses the reaction a lipid X + a UDP-2-N,3-O-bis[(3R)-3-hydroxyacyl]-alpha-D-glucosamine = a lipid A disaccharide + UDP + H(+). The protein operates within bacterial outer membrane biogenesis; LPS lipid A biosynthesis. Functionally, condensation of UDP-2,3-diacylglucosamine and 2,3-diacylglucosamine-1-phosphate to form lipid A disaccharide, a precursor of lipid A, a phosphorylated glycolipid that anchors the lipopolysaccharide to the outer membrane of the cell. The protein is Lipid-A-disaccharide synthase of Pseudomonas fluorescens (strain ATCC BAA-477 / NRRL B-23932 / Pf-5).